A 234-amino-acid polypeptide reads, in one-letter code: UDP-2,3-diacylglucosamine hydrolase (234 aa).

Mn(2+) contacts are provided by Asp9, His11, Asp42, Asn80, and His115. 80–81 (NR) provides a ligand contact to substrate. Residues Asp123, Ser161, Lys165, Lys168, and His196 each contribute to the substrate site. Mn(2+)-binding residues include His196 and His198.

This sequence belongs to the LpxH family. Mn(2+) is required as a cofactor.

Its subcellular location is the cell inner membrane. The enzyme catalyses UDP-2-N,3-O-bis[(3R)-3-hydroxytetradecanoyl]-alpha-D-glucosamine + H2O = 2-N,3-O-bis[(3R)-3-hydroxytetradecanoyl]-alpha-D-glucosaminyl 1-phosphate + UMP + 2 H(+). Its pathway is glycolipid biosynthesis; lipid IV(A) biosynthesis; lipid IV(A) from (3R)-3-hydroxytetradecanoyl-[acyl-carrier-protein] and UDP-N-acetyl-alpha-D-glucosamine: step 4/6. In terms of biological role, hydrolyzes the pyrophosphate bond of UDP-2,3-diacylglucosamine to yield 2,3-diacylglucosamine 1-phosphate (lipid X) and UMP by catalyzing the attack of water at the alpha-P atom. Involved in the biosynthesis of lipid A, a phosphorylated glycolipid that anchors the lipopolysaccharide to the outer membrane of the cell. This Histophilus somni (strain 129Pt) (Haemophilus somnus) protein is UDP-2,3-diacylglucosamine hydrolase.